The following is a 36-amino-acid chain: Conotoxin Cal6.1h (36 aa).

The propeptide occupies 1–7 (GLGRPSR). Cystine bridges form between Cys9/Cys25, Cys16/Cys29, and Cys24/Cys34.

This sequence belongs to the conotoxin O1 superfamily. As to expression, expressed by the venom duct.

The protein resides in the secreted. Functionally, probable neurotoxin with unknown target. Possibly targets ion channels. In Californiconus californicus (California cone), this protein is Conotoxin Cal6.1h.